The chain runs to 211 residues: Ribosomal RNA small subunit methyltransferase G (211 aa).

Residues Gly75, Leu80, 130–131 (VE), and Arg145 each bind S-adenosyl-L-methionine.

It belongs to the methyltransferase superfamily. RNA methyltransferase RsmG family.

The protein localises to the cytoplasm. The enzyme catalyses guanosine(527) in 16S rRNA + S-adenosyl-L-methionine = N(7)-methylguanosine(527) in 16S rRNA + S-adenosyl-L-homocysteine. In terms of biological role, specifically methylates the N7 position of guanine in position 527 of 16S rRNA. The protein is Ribosomal RNA small subunit methyltransferase G of Aromatoleum aromaticum (strain DSM 19018 / LMG 30748 / EbN1) (Azoarcus sp. (strain EbN1)).